The chain runs to 360 residues: Tubulin-like protein CetZ2 (360 aa).

Residues 10-14 (QAGGK), 65-66 (GG), 106-108 (GSG), Glu138, Asn165, and Asn183 contribute to the GTP site. A compositionally biased stretch (basic and acidic residues) spans 334 to 354 (EAIDKAETEPREDPKGMWHSD). Residues 334 to 360 (EAIDKAETEPREDPKGMWHSDDLDDLL) form a disordered region.

Belongs to the CetZ family.

Its subcellular location is the cytoplasm. Its function is as follows. Involved in cell shape control. This Haloferax volcanii (strain ATCC 29605 / DSM 3757 / JCM 8879 / NBRC 14742 / NCIMB 2012 / VKM B-1768 / DS2) (Halobacterium volcanii) protein is Tubulin-like protein CetZ2.